The following is a 119-amino-acid chain: Large ribosomal subunit protein bL20 (119 aa).

This sequence belongs to the bacterial ribosomal protein bL20 family.

In terms of biological role, binds directly to 23S ribosomal RNA and is necessary for the in vitro assembly process of the 50S ribosomal subunit. It is not involved in the protein synthesizing functions of that subunit. The chain is Large ribosomal subunit protein bL20 from Clostridium tetani (strain Massachusetts / E88).